Here is a 1097-residue protein sequence, read N- to C-terminus: RecBCD enzyme subunit RecC (1097 aa).

It belongs to the RecC family. As to quaternary structure, heterotrimer of RecB, RecC and RecD. All subunits contribute to DNA-binding.

In terms of biological role, a helicase/nuclease that prepares dsDNA breaks (DSB) for recombinational DNA repair. Binds to DSBs and unwinds DNA via a highly rapid and processive ATP-dependent bidirectional helicase activity. Holoenzyme degrades any linearized DNA that is unable to undergo homologous recombination. In the holoenzyme this subunit recognizes the wild-type Chi sequence, and when added to isolated RecB increases its ATP-dependent helicase processivity. Unlike the case in E.coli, suppresses RecA-dependent homologous recombination, is instead required for single-strand annealing pathway repair of DSB. This chain is RecBCD enzyme subunit RecC, found in Mycobacterium tuberculosis (strain CDC 1551 / Oshkosh).